The following is a 69-amino-acid chain: Cytochrome b-c1 complex subunit 6-1, mitochondrial (69 aa).

Intrachain disulfides connect cysteine 17/cysteine 59 and cysteine 31/cysteine 45.

The protein belongs to the UQCRH/QCR6 family. Component of the ubiquinol-cytochrome c oxidoreductase (cytochrome b-c1 complex, complex III, CIII), a multisubunit enzyme composed of 10 subunits. The complex is composed of 3 respiratory subunits cytochrome b (MT-CYB), cytochrome c1 (CYC1-1 or CYC1-2) and Rieske protein (UCR1-1 or UCR1-2), 2 core protein subunits MPPalpha1 (or MPPalpha2) and MPPB, and 5 low-molecular weight protein subunits QCR7-1 (or QCR7-2), UCRQ-1 (or UCRQ-2), QCR9, UCRY and probably QCR6-1 (or QCR6-2). The complex exists as an obligatory dimer and forms supercomplexes (SCs) in the inner mitochondrial membrane with NADH-ubiquinone oxidoreductase (complex I, CI), resulting in different assemblies (supercomplexes SCI(1)III(2) and SCI(2)III(4)).

It is found in the mitochondrion inner membrane. Its function is as follows. Component of the ubiquinol-cytochrome c oxidoreductase, a multisubunit transmembrane complex that is part of the mitochondrial electron transport chain which drives oxidative phosphorylation. The respiratory chain contains 3 multisubunit complexes succinate dehydrogenase (complex II, CII), ubiquinol-cytochrome c oxidoreductase (cytochrome b-c1 complex, complex III, CIII) and cytochrome c oxidase (complex IV, CIV), that cooperate to transfer electrons derived from NADH and succinate to molecular oxygen, creating an electrochemical gradient over the inner membrane that drives transmembrane transport and the ATP synthase. The cytochrome b-c1 complex catalyzes electron transfer from ubiquinol to cytochrome c, linking this redox reaction to translocation of protons across the mitochondrial inner membrane, with protons being carried across the membrane as hydrogens on the quinol. In the process called Q cycle, 2 protons are consumed from the matrix, 4 protons are released into the intermembrane space and 2 electrons are passed to cytochrome c. In Arabidopsis thaliana (Mouse-ear cress), this protein is Cytochrome b-c1 complex subunit 6-1, mitochondrial (QCR6-1).